Here is a 181-residue protein sequence, read N- to C-terminus: MRLVLLGPPGAGKGTQAAILSEKLGIPHISTGDLFRANIGEGTPLGIEAKQYIDAGKLVPTDVTARMVASRLAESDAAEGFLLDGFPRTVEQADILANLLSEAGQTLDGVVNYQVSEDVVVERMLSRGRADDNEETIRTRLGVYRDETAPLIDHYGDKIINIEAEGEVEEINARTLKALGK.

Residue 10–15 (GAGKGT) participates in ATP binding. An NMP region spans residues 30-59 (STGDLFRANIGEGTPLGIEAKQYIDAGKLV). Residues Thr-31, Arg-36, 57 to 59 (KLV), 85 to 88 (GFPR), and Gln-92 each bind AMP. The tract at residues 126 to 132 (SRGRADD) is LID. Residue Arg-127 participates in ATP binding. 2 residues coordinate AMP: Arg-129 and Arg-140. Position 166 (Gly-166) interacts with ATP.

This sequence belongs to the adenylate kinase family. As to quaternary structure, monomer.

It localises to the cytoplasm. It carries out the reaction AMP + ATP = 2 ADP. It functions in the pathway purine metabolism; AMP biosynthesis via salvage pathway; AMP from ADP: step 1/1. Its function is as follows. Catalyzes the reversible transfer of the terminal phosphate group between ATP and AMP. Plays an important role in cellular energy homeostasis and in adenine nucleotide metabolism. The protein is Adenylate kinase of Corynebacterium glutamicum (strain R).